Reading from the N-terminus, the 301-residue chain is Probable alpha-L-glutamate ligase (301 aa).

An ATP-grasp domain is found at 104 to 287 (LQLLSRKGIG…IAGIIIQYLE (184 aa)). ATP is bound by residues Lys141, 178-179 (EY), Asp187, and 211-213 (RSN). 3 residues coordinate Mg(2+): Asp248, Glu260, and Asn262. Asp248, Glu260, and Asn262 together coordinate Mn(2+).

This sequence belongs to the RimK family. It depends on Mg(2+) as a cofactor. The cofactor is Mn(2+).

This is Probable alpha-L-glutamate ligase from Pseudomonas aeruginosa (strain UCBPP-PA14).